A 187-amino-acid chain; its full sequence is Elongation factor P (187 aa).

N6-(3,6-diaminohexanoyl)-5-hydroxylysine is present on K33.

The protein belongs to the elongation factor P family. Post-translationally, may be beta-lysylated on the epsilon-amino group of Lys-33 by the combined action of EpmA and EpmB, and then hydroxylated on the C5 position of the same residue by EpmC (if this protein is present). Lysylation is critical for the stimulatory effect of EF-P on peptide-bond formation. The lysylation moiety may extend toward the peptidyltransferase center and stabilize the terminal 3-CCA end of the tRNA. Hydroxylation of the C5 position on Lys-33 may allow additional potential stabilizing hydrogen-bond interactions with the P-tRNA.

The protein localises to the cytoplasm. Its pathway is protein biosynthesis; polypeptide chain elongation. Its function is as follows. Involved in peptide bond synthesis. Alleviates ribosome stalling that occurs when 3 or more consecutive Pro residues or the sequence PPG is present in a protein, possibly by augmenting the peptidyl transferase activity of the ribosome. Modification of Lys-33 is required for alleviation. The sequence is that of Elongation factor P from Blochmanniella floridana.